The following is a 372-amino-acid chain: Probable leucine aminopeptidase MCYG_08380 (372 aa).

A signal peptide spans 1 to 19 (MKVSVLAAVAAFAAATAIA). An N-linked (GlcNAc...) asparagine glycan is attached at N96. 2 residues coordinate Zn(2+): H175 and D194. N-linked (GlcNAc...) asparagine glycosylation is found at N195 and N219. Residues E233 and D260 each coordinate Zn(2+). Residues C305 and C309 are joined by a disulfide bond. A Zn(2+)-binding site is contributed by H338.

It belongs to the peptidase M28 family. M28E subfamily. As to quaternary structure, monomer. Zn(2+) serves as cofactor.

The protein localises to the secreted. Its function is as follows. Probable extracellular aminopeptidase which contributes to pathogenicity. The sequence is that of Probable leucine aminopeptidase MCYG_08380 from Arthroderma otae (strain ATCC MYA-4605 / CBS 113480) (Microsporum canis).